A 228-amino-acid chain; its full sequence is Dehydrin Rab25 (228 aa).

Disordered regions lie at residues 1–68 (MAEH…EAPH) and 115–228 (AGVT…HGHH). Composition is skewed to basic and acidic residues over residues 169 to 187 (KEKI…EQKQ) and 212 to 228 (KGIV…HGHH).

It belongs to the plant dehydrin family.

The sequence is that of Dehydrin Rab25 (RAB25) from Oryza sativa subsp. japonica (Rice).